A 306-amino-acid polypeptide reads, in one-letter code: Phosphatidylserine decarboxylase proenzyme (306 aa).

Residues D98, H155, and S259 each act as charge relay system; for autoendoproteolytic cleavage activity in the active site. The Schiff-base intermediate with substrate; via pyruvic acid; for decarboxylase activity role is filled by S259. S259 bears the Pyruvic acid (Ser); by autocatalysis mark.

It belongs to the phosphatidylserine decarboxylase family. PSD-B subfamily. Prokaryotic type I sub-subfamily. Heterodimer of a large membrane-associated beta subunit and a small pyruvoyl-containing alpha subunit. The cofactor is pyruvate. Post-translationally, is synthesized initially as an inactive proenzyme. Formation of the active enzyme involves a self-maturation process in which the active site pyruvoyl group is generated from an internal serine residue via an autocatalytic post-translational modification. Two non-identical subunits are generated from the proenzyme in this reaction, and the pyruvate is formed at the N-terminus of the alpha chain, which is derived from the carboxyl end of the proenzyme. The autoendoproteolytic cleavage occurs by a canonical serine protease mechanism, in which the side chain hydroxyl group of the serine supplies its oxygen atom to form the C-terminus of the beta chain, while the remainder of the serine residue undergoes an oxidative deamination to produce ammonia and the pyruvoyl prosthetic group on the alpha chain. During this reaction, the Ser that is part of the protease active site of the proenzyme becomes the pyruvoyl prosthetic group, which constitutes an essential element of the active site of the mature decarboxylase.

It localises to the cell membrane. The catalysed reaction is a 1,2-diacyl-sn-glycero-3-phospho-L-serine + H(+) = a 1,2-diacyl-sn-glycero-3-phosphoethanolamine + CO2. It functions in the pathway phospholipid metabolism; phosphatidylethanolamine biosynthesis; phosphatidylethanolamine from CDP-diacylglycerol: step 2/2. In terms of biological role, catalyzes the formation of phosphatidylethanolamine (PtdEtn) from phosphatidylserine (PtdSer). The sequence is that of Phosphatidylserine decarboxylase proenzyme from Nitrosococcus oceani (strain ATCC 19707 / BCRC 17464 / JCM 30415 / NCIMB 11848 / C-107).